A 216-amino-acid polypeptide reads, in one-letter code: Flavin-dependent thymidylate synthase (216 aa).

The ThyX domain maps to 9-206 (GFVELVDVMG…PWTYEAFIKY (198 aa)). FAD-binding positions include S55, 78–80 (RHR), and E86. Residues 75–78 (QWFR), 86–90 (ELSGR), and R145 each bind dUMP. The ThyX motif motif lies at 78-88 (RHRIASYNELS). Residues 161 to 163 (NAR) and N167 each bind FAD. R172 serves as a coordination point for dUMP. The active-site Involved in ionization of N3 of dUMP, leading to its activation is the R172.

It belongs to the thymidylate synthase ThyX family. In terms of assembly, homotetramer. FAD serves as cofactor.

The enzyme catalyses dUMP + (6R)-5,10-methylene-5,6,7,8-tetrahydrofolate + NADPH + H(+) = dTMP + (6S)-5,6,7,8-tetrahydrofolate + NADP(+). It functions in the pathway pyrimidine metabolism; dTTP biosynthesis. Its function is as follows. Catalyzes the reductive methylation of 2'-deoxyuridine-5'-monophosphate (dUMP) to 2'-deoxythymidine-5'-monophosphate (dTMP) while utilizing 5,10-methylenetetrahydrofolate (mTHF) as the methyl donor, and NADPH and FADH(2) as the reductant. The sequence is that of Flavin-dependent thymidylate synthase from Thermotoga neapolitana (strain ATCC 49049 / DSM 4359 / NBRC 107923 / NS-E).